The primary structure comprises 542 residues: Importin subunit alpha-1 (542 aa).

The interval 1–29 is disordered; that stretch reads MSASSRFIPEHRRQNYKGKGTFQADELRR. The IBB domain occupies 1 to 60; sequence MSASSRFIPEHRRQNYKGKGTFQADELRRRRETQQIEIRKQKREENLNKRRNLVDVQEPA. ARM repeat units lie at residues 114 to 155, 156 to 197, 198 to 240, 241 to 282, 283 to 324, 325 to 366, 367 to 408, and 409 to 453; these read IQKV…SSNQ, THVV…SPMC, RDHV…KNPQ, PDWN…ANEK, IQAI…DDVQ, TQVI…NSSQ, IQYV…GARR, and PDQI…GELD.

The protein belongs to the importin alpha family. Interacts with pap1.

Its subcellular location is the nucleus. Its function is as follows. Binds specifically and directly to substrates containing either a simple or bipartite NLS motif. Promotes docking of import substrates to the nuclear envelope. Seems to act as a cytosolic receptor for both simple and bipartite NLS motifs. Has an essential role in mitotic chromosome condensation. Involved in nuclear protein import. Required for efficient nuclear import of both an SV40 nuclear localization signal-containing reporter protein and the pap1 component of the stress response MAP kinase pathway. Required for proper mitotic progression. This is Importin subunit alpha-1 (cut15) from Schizosaccharomyces pombe (strain 972 / ATCC 24843) (Fission yeast).